Here is a 214-residue protein sequence, read N- to C-terminus: 7-cyano-7-deazaguanine synthase (214 aa).

10-20 (FSGGQDSTTCL) provides a ligand contact to ATP. 4 residues coordinate Zn(2+): Cys184, Cys193, Cys196, and Cys199.

Belongs to the QueC family. In terms of assembly, homodimer. Zn(2+) serves as cofactor.

It catalyses the reaction 7-carboxy-7-deazaguanine + NH4(+) + ATP = 7-cyano-7-deazaguanine + ADP + phosphate + H2O + H(+). It participates in purine metabolism; 7-cyano-7-deazaguanine biosynthesis. Functionally, catalyzes the ATP-dependent conversion of 7-carboxy-7-deazaguanine (CDG) to 7-cyano-7-deazaguanine (preQ(0)). This is 7-cyano-7-deazaguanine synthase from Exiguobacterium sp. (strain ATCC BAA-1283 / AT1b).